A 442-amino-acid chain; its full sequence is Phosphoglucosamine mutase (442 aa).

S103 serves as the catalytic Phosphoserine intermediate. Residues S103, D241, D243, and D245 each contribute to the Mg(2+) site. S103 is subject to Phosphoserine.

Belongs to the phosphohexose mutase family. It depends on Mg(2+) as a cofactor. In terms of processing, activated by phosphorylation.

The enzyme catalyses alpha-D-glucosamine 1-phosphate = D-glucosamine 6-phosphate. Catalyzes the conversion of glucosamine-6-phosphate to glucosamine-1-phosphate. In Deinococcus deserti (strain DSM 17065 / CIP 109153 / LMG 22923 / VCD115), this protein is Phosphoglucosamine mutase.